Consider the following 296-residue polypeptide: Pantothenate synthetase (296 aa).

ATP is bound at residue 31 to 38; the sequence is MGYLHEGH. His38 serves as the catalytic Proton donor. Gln62 serves as a coordination point for (R)-pantoate. Residue Gln62 coordinates beta-alanine. Residue 148-151 coordinates ATP; that stretch reads GEKD. Gln154 contacts (R)-pantoate. ATP-binding positions include Val177 and 185–188; that span reads LSSR.

The protein belongs to the pantothenate synthetase family. Homodimer.

The protein localises to the cytoplasm. The enzyme catalyses (R)-pantoate + beta-alanine + ATP = (R)-pantothenate + AMP + diphosphate + H(+). It participates in cofactor biosynthesis; (R)-pantothenate biosynthesis; (R)-pantothenate from (R)-pantoate and beta-alanine: step 1/1. Its function is as follows. Catalyzes the condensation of pantoate with beta-alanine in an ATP-dependent reaction via a pantoyl-adenylate intermediate. The chain is Pantothenate synthetase from Deinococcus geothermalis (strain DSM 11300 / CIP 105573 / AG-3a).